We begin with the raw amino-acid sequence, 92 residues long: Phosphoribosyl-ATP pyrophosphatase (92 aa).

The protein belongs to the PRA-PH family.

It localises to the cytoplasm. The catalysed reaction is 1-(5-phospho-beta-D-ribosyl)-ATP + H2O = 1-(5-phospho-beta-D-ribosyl)-5'-AMP + diphosphate + H(+). It functions in the pathway amino-acid biosynthesis; L-histidine biosynthesis; L-histidine from 5-phospho-alpha-D-ribose 1-diphosphate: step 2/9. The protein is Phosphoribosyl-ATP pyrophosphatase of Leptospira biflexa serovar Patoc (strain Patoc 1 / ATCC 23582 / Paris).